A 1172-amino-acid chain; its full sequence is MATSLSSAPTQLRPSPSPSHHRLLHRSSLLPFPRRHHHRRRRCGALSIARASASAKDGVTVRRFPAAPTEGGRLAGVRKIMILGAGPIVIGQACEFDYSGTQACKALAEEGYEVVLVNSNPATIMTDPDLAHRTYIGPMTPPLVERIIAAERPDALLPTMGGQTALNLAVSLADSGALDRLGVRLIGASLPAIRAAEDRQLFKQAMDRIGLKTPPSGIGTTLEECISIAEDIGEFPLIVRPAFTLGGTGGGIAYNRAEFEDICRAGLAASHTQQVLVEKSLLGWKEYELEVMRDMADNVVIICSIENIDPMGVHTGDSITVAPAQTLTDKEYQRLRDYSVAIIREIGVECGGSNVQFAVNPADGEVMVIEMNPRVSRSSALASKATGFPIAKMAAKLSVGYTLDQIPNDITKKTPASFEPSIDYVVTKIPRFAFEKFPGSEPVLTTQMKSVGEAMALGRTFQESFQKAVRSLETGFAGWGCAPIKELDWDWEKLKYSLRVPNPDRIHAIYAAFKKGMRIQDIHEISFIDKWFLTELKELVDVEQFLISRGLDQLSKDDFYQVKRRGFSDTQIAFATSSSETDVRLRRLALEVAPTYKRVDTCAAEFEANTPYMYSSYEYECESVPTNKKKVLILGGGPNRIGQGIEFDYCCCHASFALREAGYETIMMNSNPETVSTDYDTSDRLYFEPLTVEDVTNVIDLERPDGIIVQFGGQTPLKLALPIQQYLEDKKLVSASGTGLVKIWGTSPDSIDAAEDRKRFNAILEELGIEQPKGGIARSESDALSIASEVGYPVVVRPSYVLGGRAMEIVYNDEKLIKYLATAVQVDPERPVLVDKYLIDAIEIDVDALADSVGNVVIGGIMEHIEQAGIHSGDSACSLPTRTVSAKCLDIIRSWTTKLAKRLNVCGLMNCQYAITTSGEVFLLEANPRASRTVPFVSKAIGHPLAKYASLVMSGVTLPELGYTQEVVPKHVSVKEAVLPFEKFQGCDILLGPEMRSTGEVMGIDYEFSGAFAKAQIAAGQKLPLNGTVFLSLNDLTKRHLAEIGRGFRELGFNIIATSGTAKVLQLEGIPVEPVLKIHEGRPNARDMLKNGQIQVMVITSSGDALDSKDGLQLRRLALAYKVPIITTVDGARATIDAIKSLKNKSIETLALQDYFQTTDASQNLQAAQSAS.

Over residues 1-10 the composition is skewed to polar residues; it reads MATSLSSAPT. Residues 1 to 37 form a disordered region; the sequence is MATSLSSAPTQLRPSPSPSHHRLLHRSSLLPFPRRHH. A chloroplast-targeting transit peptide spans 1–50; sequence MATSLSSAPTQLRPSPSPSHHRLLHRSSLLPFPRRHHHRRRRCGALSIAR. The carboxyphosphate synthetic domain stretch occupies residues 72–473; that stretch reads GRLAGVRKIM…SFQKAVRSLE (402 aa). ATP-binding residues include arginine 199, arginine 240, glycine 246, glycine 247, lysine 279, leucine 281, glutamate 286, glycine 312, valine 313, histidine 314, glutamine 356, and glutamate 370. An ATP-grasp 1 domain is found at 203–399; it reads KQAMDRIGLK…IAKMAAKLSV (197 aa). Residues glutamine 356, glutamate 370, and asparagine 372 each coordinate Mg(2+). Positions 474–623 are oligomerization domain; sequence TGFAGWGCAP…YSSYEYECES (150 aa). Positions 624–1019 are carbamoyl phosphate synthetic domain; that stretch reads VPTNKKKVLI…GAFAKAQIAA (396 aa). Positions 761–954 constitute an ATP-grasp 2 domain; sequence NAILEELGIE…LAKYASLVMS (194 aa). Positions 797, 836, 838, 843, 869, 870, 871, 872, 912, and 925 each coordinate ATP. The Mg(2+) site is built by glutamine 912, glutamate 925, and asparagine 927. Positions 1020-1172 are allosteric domain; sequence GQKLPLNGTV…QNLQAAQSAS (153 aa). The MGS-like domain occupies 1021–1162; that stretch reads QKLPLNGTVF…QDYFQTTDAS (142 aa).

Belongs to the CarB family. In terms of assembly, heterodimer composed of 2 chains; the small (or glutamine) chain promotes the hydrolysis of glutamine to ammonia, which is used by the large (or ammonia) chain to synthesize carbamoyl phosphate. Requires Mg(2+) as cofactor. Mn(2+) is required as a cofactor.

The protein localises to the plastid. It is found in the chloroplast. The enzyme catalyses hydrogencarbonate + L-glutamine + 2 ATP + H2O = carbamoyl phosphate + L-glutamate + 2 ADP + phosphate + 2 H(+). It carries out the reaction hydrogencarbonate + NH4(+) + 2 ATP = carbamoyl phosphate + 2 ADP + phosphate + 2 H(+). It functions in the pathway amino-acid biosynthesis; L-arginine biosynthesis; carbamoyl phosphate from bicarbonate: step 1/1. Its function is as follows. Large subunit of the arginine-specific carbamoyl phosphate synthase (CPSase). CPSase catalyzes the formation of carbamoyl phosphate from the ammonia moiety of glutamine, hydrogencarbonate, and phosphate donated by ATP, constituting the first step of 2 biosynthetic pathways, one leading to arginine and/or urea and the other to pyrimidine nucleotides. The large subunit (synthetase) binds the substrates ammonia (free or transferred from glutamine from the small subunit), hydrogencarbonate and ATP and carries out an ATP-coupled ligase reaction, activating hydrogencarbonate by forming carboxy phosphate which reacts with ammonia to form carbamoyl phosphate. The chain is Carbamoyl phosphate synthase arginine-specific large chain, chloroplastic (CARB) from Oryza sativa subsp. japonica (Rice).